We begin with the raw amino-acid sequence, 334 residues long: Fructose-1,6-bisphosphatase class 1 (334 aa).

The Mg(2+) site is built by E92, D114, L116, and D117. Substrate contacts are provided by residues 117 to 120 (DGSS) and N209. E281 contacts Mg(2+).

The protein belongs to the FBPase class 1 family. Homotetramer. The cofactor is Mg(2+).

It localises to the cytoplasm. The catalysed reaction is beta-D-fructose 1,6-bisphosphate + H2O = beta-D-fructose 6-phosphate + phosphate. Its pathway is carbohydrate biosynthesis; gluconeogenesis. The polypeptide is Fructose-1,6-bisphosphatase class 1 (Nitrosomonas europaea (strain ATCC 19718 / CIP 103999 / KCTC 2705 / NBRC 14298)).